Here is a 963-residue protein sequence, read N- to C-terminus: Iron-responsive element-binding protein 2 (963 aa).

Cysteine 512, cysteine 578, and cysteine 581 together coordinate [4Fe-4S] cluster.

Belongs to the aconitase/IPM isomerase family. Interacts with RBCK1 only in iron-rich conditions. Interacts (when associated with the 4Fe-4S) with FBXL5. Interacts with CIAO1 and CIAO2A. [4Fe-4S] cluster serves as cofactor. Ubiquitinated and degraded by the proteasome in presence of high level of iron and oxygen. Ubiquitinated by a SCF complex containing FBXL5. Upon iron and oxygen depletion FBXL5 is degraded, preventing ubiquitination and allowing its RNA-binding activity.

The protein resides in the cytoplasm. In terms of biological role, RNA-binding protein that binds to iron-responsive elements (IRES), which are stem-loop structures found in the 5'-UTR of ferritin, and delta aminolevulinic acid synthase mRNAs, and in the 3'-UTR of transferrin receptor mRNA. Binding to the IRE element in ferritin results in the repression of its mRNA translation. Binding of the protein to the transferrin receptor mRNA inhibits the degradation of this otherwise rapidly degraded mRNA. The polypeptide is Iron-responsive element-binding protein 2 (Ireb2) (Mus musculus (Mouse)).